The following is a 110-amino-acid chain: Large ribosomal subunit protein uL22 (110 aa).

It belongs to the universal ribosomal protein uL22 family. Part of the 50S ribosomal subunit.

Its function is as follows. This protein binds specifically to 23S rRNA; its binding is stimulated by other ribosomal proteins, e.g. L4, L17, and L20. It is important during the early stages of 50S assembly. It makes multiple contacts with different domains of the 23S rRNA in the assembled 50S subunit and ribosome. In terms of biological role, the globular domain of the protein is located near the polypeptide exit tunnel on the outside of the subunit, while an extended beta-hairpin is found that lines the wall of the exit tunnel in the center of the 70S ribosome. The polypeptide is Large ribosomal subunit protein uL22 (Paracidovorax citrulli (strain AAC00-1) (Acidovorax citrulli)).